We begin with the raw amino-acid sequence, 491 residues long: Cadherin-3 (491 aa).

Cadherin domains follow at residues 1–102 (ENTV…PPVF), 103–208 (VPPS…DHGP), and 209–314 (VPEP…DPWT). At 1-316 (ENTVSHEVQR…VTCRDPWTWG (316 aa)) the chain is on the extracellular side. N-linked (GlcNAc...) asparagine glycosylation occurs at N228. The chain crosses the membrane as a helical span at residues 317–339 (FLLPILGAALALLLLLLVLLFLV). Residues 340-491 (RKKRKIKEPL…ADMYGGGQDD (152 aa)) lie on the Cytoplasmic side of the membrane.

Interacts with CDCP1 and CTNNB1.

The protein resides in the cell membrane. Functionally, cadherins are calcium-dependent cell adhesion proteins. They preferentially interact with themselves in a homophilic manner in connecting cells; cadherins may thus contribute to the sorting of heterogeneous cell types. This is Cadherin-3 (CDH3) from Bos taurus (Bovine).